The following is a 1445-amino-acid chain: Tensin-3 (1445 aa).

The Phosphatase tensin-type domain occupies 1 to 170; the sequence is MEEGHGLDLT…QFLSGLLSGS (170 aa). One can recognise a C2 tensin-type domain in the interval 175–301; it reads ASPLFLHFVI…GKVELVFSAT (127 aa). The residue at position 323 (Thr323) is a Phosphothreonine. 2 positions are modified to phosphoserine: Ser332 and Ser361. The segment at 358-421 is disordered; that stretch reads RKKSSSDPGI…GTRRGLSAQE (64 aa). Over residues 386 to 400 the composition is skewed to polar residues; it reads TLSVSSDSGHSTASA. A phosphoserine mark is found at Ser440 and Ser516. Residues 538–568 form a disordered region; the sequence is VPDLGLGMDGPYERERTFGSREPKQPQPLLR. The span at 548–561 shows a compositional bias: basic and acidic residues; that stretch reads PYERERTFGSREPK. A Phosphoserine modification is found at Ser571. Disordered regions lie at residues 618 to 695 and 717 to 769; these read DNPG…TLDI and PTHM…QPLG. At Thr632 the chain carries Phosphothreonine. 4 positions are modified to phosphoserine: Ser649, Ser660, Ser687, and Ser690. A compositionally biased stretch (polar residues) spans 723-733; it reads LGSQANGSVSP. Phosphoserine occurs at positions 735 and 776. Tyr780 carries the post-translational modification Phosphotyrosine. Phosphoserine is present on residues Ser811, Ser866, and Ser901. 2 disordered regions span residues 859–981 and 1076–1127; these read ALRH…TRKD and GHSS…PHSG. Residues 864-873 are compositionally biased toward pro residues; the sequence is PFSPPEPPLS. Residues 914–935 are compositionally biased toward polar residues; sequence ASSTPSFQQAFASSCTISSNGP. A compositionally biased stretch (basic and acidic residues) spans 1099–1109; that stretch reads PEKKRASEGDR. The segment covering 1110-1127 has biased composition (low complexity); it reads SLGSVSPSSSGFSSPHSG. Residues Ser1149 and Ser1154 each carry the phosphoserine modification. In terms of domain architecture, SH2 spans 1172-1282; that stretch reads WYKADISREQ…ALPCKLLIPE (111 aa). Phosphoserine is present on residues Ser1293 and Ser1441. The region spanning 1310 to 1444 is the PTB domain; it reads ACNVWYLNSV…SKVMIGSPKK (135 aa).

Belongs to the PTEN phosphatase protein family. Interacts with EGFR; EGF promotes the interaction with EGFR. Interacts with PTK2/FAK1 and BCAR1. Tyrosine phosphorylation is critical for these interactions. Interacts with Rho GTPase-activating protein DLC1 and with the regulatory p85 subunit of the PI3K kinase complex; in resting cells, interacts (via C2 tensin-type domain) with DLC1 but, following growth factor stimulation, TNS3 is phosphorylated which leads to weakened interaction with DLC1 and enhanced interaction (via C2 tensin-type domain) with p85 while DLC1 interaction with PTEN increases. Interacts (when phosphorylated on the SH2 domain) with integrins ITGB1, ITGB3 and ITGB5 and with scaffolding protein PEAK1 (phosphorylated on 'Tyr-635'); mediates the association of PEAK1 with ITGB1, ITGB3 and ITGB5. Interacts (via N-terminus) with DOCK5 (via N-terminus); the interaction increases DOCK5 guanine nucleotide exchange activity towards Rac. Interacts with receptor tyrosine kinase MET. Post-translationally, phosphorylated on Ser/Thr and Tyr residues. Phosphorylated on Thr-323 in the C2-type tensin domain following EGF stimulation which changes its binding preference from DLC1 to the p85 regulatory subunit of the PI3K kinase complex. EGF induces tyrosine phosphorylation in a time- and dose-dependent manner. Phosphorylation of the SH2 domain enhances interaction with PEAK1. In terms of tissue distribution, expressed in umbilical vein endothelial cells, epithelial cells, and fibroblasts cells (at protein level). Highly expressed in thyroid, kidney and placenta. Low expression in heart, skeletal muscle, spleen, liver, and lung. Expressed at higher levels in tonsil-derived mesenchymal stem cells (MSCs) than in adipose tissue-derived MSCs or bone marrow-derived MSCs. Expressed in tumor endothelial cells. Expression seems to be down-regulated in thyroid tumor tissues and in anaplastic carcinomas.

It localises to the cell junction. It is found in the focal adhesion. The protein resides in the cell projection. Its subcellular location is the podosome. Its function is as follows. May act as a protein phosphatase and/or a lipid phosphatase. Involved in the dissociation of the integrin-tensin-actin complex. EGF activates TNS4 and down-regulates TNS3 which results in capping the tail of ITGB1. Increases DOCK5 guanine nucleotide exchange activity towards Rac and plays a role in osteoclast podosome organization. Enhances RHOA activation in the presence of DLC1. Required for growth factor-induced epithelial cell migration; growth factor stimulation induces TNS3 phosphorylation which changes its binding preference from DLC1 to the p85 regulatory subunit of the PI3K kinase complex, displacing PI3K inhibitor PTEN and resulting in translocation of the TNS3-p85 complex to the leading edge of migrating cells to promote RAC1 activation. Meanwhile, PTEN switches binding preference from p85 to DLC1 and the PTEN-DLC1 complex translocates to the posterior of migrating cells to activate RHOA. Acts as an adapter protein by bridging the association of scaffolding protein PEAK1 with integrins ITGB1, ITGB3 and ITGB5 which contributes to the promotion of cell migration. Controls tonsil-derived mesenchymal stem cell proliferation and differentiation by regulating the activity of integrin ITGB1. The chain is Tensin-3 (TNS3) from Homo sapiens (Human).